The sequence spans 229 residues: Peptidase E (229 aa).

Residues S120, D135, and H157 each act as charge relay system in the active site.

The protein belongs to the peptidase S51 family.

It is found in the cytoplasm. The enzyme catalyses Dipeptidase E catalyzes the hydrolysis of dipeptides Asp-|-Xaa. It does not act on peptides with N-terminal Glu, Asn or Gln, nor does it cleave isoaspartyl peptides.. Functionally, hydrolyzes dipeptides containing N-terminal aspartate residues. May play a role in allowing the cell to use peptide aspartate to spare carbon otherwise required for the synthesis of the aspartate family of amino acids. The chain is Peptidase E from Shigella boydii serotype 18 (strain CDC 3083-94 / BS512).